The chain runs to 216 residues: MDEVANALAVSQTMMEKMQKLEISKNYDVEKFETLLRLPARDVNTFMEKEAKKTDDEKMTDMDRRIKRIREDKTDRAARTLQKYFRKIRVKGEQNHINKRISKIPAKRRVVLLEQIRQKMGEQQPIRRFGGYQVIRAVELHKGKQKLQKDWLAKLSIDVNFHDKNLSRPNSPTHFIANSIPTLIRKKAEMKHAEKMQEIDSSIMDIYCGFQKDNLH.

This is an uncharacterized protein from Caenorhabditis elegans.